The sequence spans 451 residues: MGKYFGTDGVRGEANVELTPELAFQLGRFGGYVLSQHETERPKVFVARDTRISGEMLESALIAGLLSVGIEVYKLGVLATPGVSYLVRTEKASAGVMISASHNPALDNGIKFFGNDGFKLADDQELEIEALLDAPEDTLPRPSAEGLGTLVDYPEGLRKYEKFLVTTGTDLSGMTVALDTANGAASVSARDVFLDLNAEIAVIGEKPNGLNINDGVGSTHPEQLQELVKETGADLGLAFDGDSDRLIAVDETGEIVDGDRIMFIIGKYLSEKGLLAHNTIVTTVMSNLGFHKALDKQGINKAITAVGDRYVVEEMRSSGYNLGGEQSGHVIIMDYNTTGDGQLTAIQLAKVMKETGKSLSELAAEVTIYPQKLVNIRVENSMKERAMEVPAIANIIAKMEDEMAGNGRILVRPSGTEPLLRVMAEAPTDAEVDYYVDTIADVVRTEIGCDN.

The active-site Phosphoserine intermediate is the S101. Mg(2+) is bound by residues S101, D240, D242, and D244. S101 is modified (phosphoserine).

It belongs to the phosphohexose mutase family. It depends on Mg(2+) as a cofactor. In terms of processing, activated by phosphorylation.

The enzyme catalyses alpha-D-glucosamine 1-phosphate = D-glucosamine 6-phosphate. Catalyzes the conversion of glucosamine-6-phosphate to glucosamine-1-phosphate. In Streptococcus pyogenes serotype M3 (strain SSI-1), this protein is Phosphoglucosamine mutase.